We begin with the raw amino-acid sequence, 257 residues long: Histidine/lysine/arginine/ornithine transport ATP-binding protein HisP (257 aa).

The region spanning 6 to 252 (LNVIDLHKRY…PQSPRLQRFL (247 aa)) is the ABC transporter domain. ATP contacts are provided by Ser40, Gly41, Gly43, Lys44, Ser45, and Thr46.

This sequence belongs to the ABC transporter superfamily. As to quaternary structure, the HisPMQJ complex is composed of two ATP-binding proteins (HisP), two transmembrane proteins (HisM and HisQ) and a solute-binding protein (HisJ). The HisPMQ-ArgT complex is composed of two ATP-binding proteins (HisP), two transmembrane proteins (HisM and HisQ) and a solute-binding protein (ArgT).

Its subcellular location is the cell inner membrane. The enzyme catalyses a polar amino acid(out) + ATP + H2O = a polar amino acid(in) + ADP + phosphate + H(+). It carries out the reaction L-histidine(out) + ATP + H2O = L-histidine(in) + ADP + phosphate + H(+). It catalyses the reaction L-lysine(out) + ATP + H2O = L-lysine(in) + ADP + phosphate + H(+). The catalysed reaction is L-arginine(out) + ATP + H2O = L-arginine(in) + ADP + phosphate + H(+). The enzyme catalyses L-ornithine(out) + ATP + H2O = L-ornithine(in) + ADP + phosphate + H(+). Its function is as follows. Part of the ABC transporter complex HisPMQJ involved in histidine transport. Is also part of the ABC transporter complex HisPMQ-ArgT involved in lysine/arginine/ornithine transport. Shows ATPase activity. Responsible for energy coupling to the transport system. In Escherichia coli (strain K12), this protein is Histidine/lysine/arginine/ornithine transport ATP-binding protein HisP.